A 638-amino-acid polypeptide reads, in one-letter code: Chaperone protein DnaK 2 (638 aa).

Thr199 is modified (phosphothreonine; by autocatalysis). Positions 604 to 626 (AKEQAQSAPEGAQEADAAPADDV) are disordered. Residues 613–624 (EGAQEADAAPAD) are compositionally biased toward low complexity.

This sequence belongs to the heat shock protein 70 family.

Acts as a chaperone. The protein is Chaperone protein DnaK 2 of Colwellia psychrerythraea (strain 34H / ATCC BAA-681) (Vibrio psychroerythus).